The primary structure comprises 436 residues: Glutamyl-tRNA reductase (436 aa).

Residues 49 to 52 (TCNR), serine 118, 123 to 125 (EPQ), and glutamine 129 contribute to the substrate site. Catalysis depends on cysteine 50, which acts as the Nucleophile. An NADP(+)-binding site is contributed by 203 to 208 (GAGETI).

The protein belongs to the glutamyl-tRNA reductase family. In terms of assembly, homodimer.

The enzyme catalyses (S)-4-amino-5-oxopentanoate + tRNA(Glu) + NADP(+) = L-glutamyl-tRNA(Glu) + NADPH + H(+). The protein operates within porphyrin-containing compound metabolism; protoporphyrin-IX biosynthesis; 5-aminolevulinate from L-glutamyl-tRNA(Glu): step 1/2. Catalyzes the NADPH-dependent reduction of glutamyl-tRNA(Glu) to glutamate 1-semialdehyde (GSA). This chain is Glutamyl-tRNA reductase, found in Actinobacillus pleuropneumoniae serotype 7 (strain AP76).